The primary structure comprises 73 residues: Large ribosomal subunit protein bL28 (73 aa).

This sequence belongs to the bacterial ribosomal protein bL28 family.

The protein is Large ribosomal subunit protein bL28 of Buchnera aphidicola subsp. Cinara cedri (strain Cc).